The chain runs to 138 residues: HTH-type transcriptional regulator CymR (138 aa).

The HTH rrf2-type domain maps to 2–125 (KISTKGRYGL…DSTTLEDLAS (124 aa)). The segment at residues 28–51 (LKSIAQTNNLSEHYLEQLVSPLRN) is a DNA-binding region (H-T-H motif).

As to quaternary structure, homodimer. Forms homotetramers at higher concentrations of protein. Forms CymR(2):CysK(2) or CymR(4):CysK(4) complexes in the absence of O-acetylserine.

Master repressor of cysteine metabolism in B.subtilis. Controls the expression of genes involved either in cysteine synthesis from sulfide (cysK), sulfonates (ssu), or methionine (mccAB) or in cystine uptake (tcyP). Activity of CymR is positively regulated by CysK in response to cysteine availability. When cysteine is present, the pool of O-acetylserine (OAS) is low, which leads to the formation of a CymR-CysK complex and transcriptional repression of the CymR regulon occurs. In the absence of cysteine, the OAS pool is high and the CymR-CysK complex is mostly dissociated, leading to a faster dissociation of CymR from its DNA targets and the lifting of CymR-dependent repression. This is HTH-type transcriptional regulator CymR (cymR) from Bacillus subtilis (strain 168).